The primary structure comprises 303 residues: MAVTKELLQMDLYALLGIEEKAADKEVKKAYRQKALSCHPDKNPDNPRAAELFHQLSQALEVLTDAAARAAYDKVRKARKQAAERTQRLDEKRKKVKLDLEARERQAQAQGTEEEEESRSTTTLEQEIARLREEGSRQLEEQQRLIQEQIRQDREQRLRGRTENTEGKGTPKLKLKWKCKKEDESQGGYSRDILLRLLQKYGEVLNLVLSKKKAGNAIVEFATVRAAELAVRNEVGLADNPLKVSWLEGQPQGTVDPSPPGLSKGSVLSERDYESLVMMRMRQAAERQQLIAQMQQEDEGRPT.

The 66-residue stretch at 11-76 (DLYALLGIEE…AARAAYDKVR (66 aa)) folds into the J domain. 2 stretches are compositionally biased toward basic and acidic residues: residues 78–106 (ARKQ…RERQ) and 150–166 (IRQD…ENTE). Disordered regions lie at residues 78–124 (ARKQ…TTTL) and 150–170 (IRQD…GKGT). Residues 178–249 (KCKKEDESQG…NPLKVSWLEG (72 aa)) enclose the RRM domain. K264 bears the N6-methyllysine mark.

The protein resides in the cytoplasm. Its subcellular location is the nucleus. May negatively affect PAX8-induced thyroglobulin/TG transcription. The sequence is that of DnaJ homolog subfamily C member 17 (Dnajc17) from Rattus norvegicus (Rat).